The following is a 116-amino-acid chain: NADH-ubiquinone oxidoreductase chain 3 (116 aa).

3 helical membrane-spanning segments follow: residues 3–23 (LITT…TISF), 56–76 (FFLI…LLPL), and 87–107 (LTLI…IYEW).

Belongs to the complex I subunit 3 family.

The protein resides in the mitochondrion membrane. It carries out the reaction a ubiquinone + NADH + 5 H(+)(in) = a ubiquinol + NAD(+) + 4 H(+)(out). Functionally, core subunit of the mitochondrial membrane respiratory chain NADH dehydrogenase (Complex I) that is believed to belong to the minimal assembly required for catalysis. Complex I functions in the transfer of electrons from NADH to the respiratory chain. The immediate electron acceptor for the enzyme is believed to be ubiquinone. This Oncorhynchus mykiss (Rainbow trout) protein is NADH-ubiquinone oxidoreductase chain 3 (MT-ND3).